A 249-amino-acid polypeptide reads, in one-letter code: Putative NAD(+)--arginine ADP-ribosyltransferase Vis (249 aa).

Residues 1 to 18 (MNTRFLLLLCCLSFTTFS) form the signal peptide. The region spanning 31–223 (EEEVTQLAED…IGVETVKASA (193 aa)) is the TR mART core domain. NAD(+) contacts are provided by residues 68 to 80 (SISGYQTANDYLR), 117 to 120 (RGTW), and Glu-137. The active site involves Arg-117. Residues Ser-142 and Glu-191 contribute to the active site. Glu-191 serves as a coordination point for NAD(+).

The protein belongs to the Arg-specific ADP-ribosyltransferase family.

Its subcellular location is the secreted. It catalyses the reaction L-arginyl-[protein] + NAD(+) = N(omega)-(ADP-D-ribosyl)-L-arginyl-[protein] + nicotinamide + H(+). In terms of biological role, a probable mono(ADP-ribosyl)transferase, it may ADP-ribosylate Arg in target protein(s). Upon expression in yeast cells causes cell death. In Vibrio splendidus (strain 12B01), this protein is Putative NAD(+)--arginine ADP-ribosyltransferase Vis.